Here is a 630-residue protein sequence, read N- to C-terminus: Plastin-3 (630 aa).

EF-hand domains lie at Asp-12–Pro-47 and Lys-52–Ser-87. Asp-25, Asn-27, Asn-29, Glu-36, Asp-65, Asn-67, Asp-69, Lys-71, and Glu-76 together coordinate Ca(2+). Actin-binding regions lie at residues Thr-109 to Lys-382 and Pro-383 to Met-627. Calponin-homology (CH) domains lie at Glu-123 to Leu-239 and Leu-267 to Pro-378. 4 positions are modified to phosphoserine: Ser-268, Ser-293, Ser-326, and Ser-339. Phosphothreonine is present on Thr-391. 2 Calponin-homology (CH) domains span residues Thr-397–Thr-506 and Lys-518–Met-627.

Monomer.

The protein resides in the cytoplasm. In terms of biological role, actin-bundling protein. This is Plastin-3 (Pls3) from Rattus norvegicus (Rat).